The sequence spans 146 residues: Large ribosomal subunit protein uL15 (146 aa).

The tract at residues Met-1–Met-54 is disordered.

This sequence belongs to the universal ribosomal protein uL15 family. As to quaternary structure, part of the 50S ribosomal subunit.

In terms of biological role, binds to the 23S rRNA. The sequence is that of Large ribosomal subunit protein uL15 from Mycobacterium marinum (strain ATCC BAA-535 / M).